We begin with the raw amino-acid sequence, 104 residues long: Large ribosomal subunit protein bL21 (104 aa).

It belongs to the bacterial ribosomal protein bL21 family. In terms of assembly, part of the 50S ribosomal subunit. Contacts protein L20.

In terms of biological role, this protein binds to 23S rRNA in the presence of protein L20. In Streptococcus gordonii (strain Challis / ATCC 35105 / BCRC 15272 / CH1 / DL1 / V288), this protein is Large ribosomal subunit protein bL21.